The following is a 291-amino-acid chain: Bis(5'-nucleosyl)-tetraphosphatase, symmetrical (291 aa).

It belongs to the Ap4A hydrolase family.

The enzyme catalyses P(1),P(4)-bis(5'-adenosyl) tetraphosphate + H2O = 2 ADP + 2 H(+). Hydrolyzes diadenosine 5',5'''-P1,P4-tetraphosphate to yield ADP. This Pseudomonas syringae pv. syringae (strain B728a) protein is Bis(5'-nucleosyl)-tetraphosphatase, symmetrical.